Here is a 174-residue protein sequence, read N- to C-terminus: MALLEIIHYPSKILRTISKEVVSFDSKLHQQLDDMHETMIASEGIGLAAIQVGLPLRMLIINLPQEDGVQHKEDCLEIINPKWIETKGSMMYKEGCLSVPGFYEEVERFEKVKIEYQNRFAEVKILEASELLAVAIQHEIDHLNGVLFVDKLSILKRKKFEKELKELQKKQKRE.

Fe cation contacts are provided by C96 and H138. E139 is an active-site residue. A Fe cation-binding site is contributed by H142.

It belongs to the polypeptide deformylase family. Fe(2+) serves as cofactor.

The enzyme catalyses N-terminal N-formyl-L-methionyl-[peptide] + H2O = N-terminal L-methionyl-[peptide] + formate. In terms of biological role, removes the formyl group from the N-terminal Met of newly synthesized proteins. Requires at least a dipeptide for an efficient rate of reaction. N-terminal L-methionine is a prerequisite for activity but the enzyme has broad specificity at other positions. This chain is Peptide deformylase, found in Helicobacter pylori (strain P12).